The sequence spans 178 residues: Crossover junction endodeoxyribonuclease RuvC (178 aa).

Residues Asp7, Glu67, and Asp139 contribute to the active site. Mg(2+) contacts are provided by Asp7, Glu67, and Asp139.

Belongs to the RuvC family. As to quaternary structure, homodimer which binds Holliday junction (HJ) DNA. The HJ becomes 2-fold symmetrical on binding to RuvC with unstacked arms; it has a different conformation from HJ DNA in complex with RuvA. In the full resolvosome a probable DNA-RuvA(4)-RuvB(12)-RuvC(2) complex forms which resolves the HJ. Requires Mg(2+) as cofactor.

It is found in the cytoplasm. It carries out the reaction Endonucleolytic cleavage at a junction such as a reciprocal single-stranded crossover between two homologous DNA duplexes (Holliday junction).. In terms of biological role, the RuvA-RuvB-RuvC complex processes Holliday junction (HJ) DNA during genetic recombination and DNA repair. Endonuclease that resolves HJ intermediates. Cleaves cruciform DNA by making single-stranded nicks across the HJ at symmetrical positions within the homologous arms, yielding a 5'-phosphate and a 3'-hydroxyl group; requires a central core of homology in the junction. The consensus cleavage sequence is 5'-(A/T)TT(C/G)-3'. Cleavage occurs on the 3'-side of the TT dinucleotide at the point of strand exchange. HJ branch migration catalyzed by RuvA-RuvB allows RuvC to scan DNA until it finds its consensus sequence, where it cleaves and resolves the cruciform DNA. The sequence is that of Crossover junction endodeoxyribonuclease RuvC from Trichlorobacter lovleyi (strain ATCC BAA-1151 / DSM 17278 / SZ) (Geobacter lovleyi).